A 726-amino-acid polypeptide reads, in one-letter code: Catalase-peroxidase (726 aa).

The interval 1–33 (MSTSDDIHNTTATGKCPFHQGGHDQSAGAGTTT) is disordered. The tryptophyl-tyrosyl-methioninium (Trp-Tyr) (with M-252) cross-link spans 105 to 226 (WHGAGTYRSI…LGATEMGLIY (122 aa)). The active-site Proton acceptor is the histidine 106. Positions 226 to 252 (YVNPEGPDHSGEPLSAAAAIRATFGNM) form a cross-link, tryptophyl-tyrosyl-methioninium (Tyr-Met) (with W-105). Heme b is bound at residue histidine 267.

The protein belongs to the peroxidase family. Peroxidase/catalase subfamily. As to quaternary structure, homodimer or homotetramer. Heme b is required as a cofactor. In terms of processing, formation of the three residue Trp-Tyr-Met cross-link is important for the catalase, but not the peroxidase activity of the enzyme.

It catalyses the reaction H2O2 + AH2 = A + 2 H2O. The catalysed reaction is 2 H2O2 = O2 + 2 H2O. Functionally, bifunctional enzyme with both catalase and broad-spectrum peroxidase activity. The sequence is that of Catalase-peroxidase from Escherichia coli (strain K12 / DH10B).